Reading from the N-terminus, the 114-residue chain is Transmembrane protein 14C (114 aa).

4 helical membrane-spanning segments follow: residues 8–28 (LVPL…GGII), 33–53 (AGSV…GLGS), 62–82 (NIWL…MRFY), and 87–107 (FMPA…LGIS).

The protein resides in the mitochondrion membrane. In terms of biological role, required for normal heme biosynthesis. This Bos taurus (Bovine) protein is Transmembrane protein 14C (TMEM14C).